The primary structure comprises 424 residues: Enolase (424 aa).

Gln162 is a binding site for (2R)-2-phosphoglycerate. Glu204 acts as the Proton donor in catalysis. Residues Asp241, Glu284, and Asp311 each coordinate Mg(2+). The (2R)-2-phosphoglycerate site is built by Lys336, Arg365, Ser366, and Lys387. The Proton acceptor role is filled by Lys336.

The protein belongs to the enolase family. Mg(2+) serves as cofactor.

It is found in the cytoplasm. The protein localises to the secreted. It localises to the cell surface. It catalyses the reaction (2R)-2-phosphoglycerate = phosphoenolpyruvate + H2O. It participates in carbohydrate degradation; glycolysis; pyruvate from D-glyceraldehyde 3-phosphate: step 4/5. Functionally, catalyzes the reversible conversion of 2-phosphoglycerate (2-PG) into phosphoenolpyruvate (PEP). It is essential for the degradation of carbohydrates via glycolysis. This Chelativorans sp. (strain BNC1) protein is Enolase.